Here is a 613-residue protein sequence, read N- to C-terminus: Dihydroxy-acid dehydratase (613 aa).

Asp-81 lines the Mg(2+) pocket. Cys-122 lines the [2Fe-2S] cluster pocket. The Mg(2+) site is built by Asp-123 and Lys-124. An N6-carboxylysine modification is found at Lys-124. Cys-195 contacts [2Fe-2S] cluster. Glu-491 is a Mg(2+) binding site. Ser-517 serves as the catalytic Proton acceptor.

Belongs to the IlvD/Edd family. As to quaternary structure, homodimer. [2Fe-2S] cluster is required as a cofactor. It depends on Mg(2+) as a cofactor.

The enzyme catalyses (2R)-2,3-dihydroxy-3-methylbutanoate = 3-methyl-2-oxobutanoate + H2O. It catalyses the reaction (2R,3R)-2,3-dihydroxy-3-methylpentanoate = (S)-3-methyl-2-oxopentanoate + H2O. The protein operates within amino-acid biosynthesis; L-isoleucine biosynthesis; L-isoleucine from 2-oxobutanoate: step 3/4. Its pathway is amino-acid biosynthesis; L-valine biosynthesis; L-valine from pyruvate: step 3/4. Functions in the biosynthesis of branched-chain amino acids. Catalyzes the dehydration of (2R,3R)-2,3-dihydroxy-3-methylpentanoate (2,3-dihydroxy-3-methylvalerate) into 2-oxo-3-methylpentanoate (2-oxo-3-methylvalerate) and of (2R)-2,3-dihydroxy-3-methylbutanoate (2,3-dihydroxyisovalerate) into 2-oxo-3-methylbutanoate (2-oxoisovalerate), the penultimate precursor to L-isoleucine and L-valine, respectively. The sequence is that of Dihydroxy-acid dehydratase from Aeromonas salmonicida (strain A449).